Consider the following 211-residue polypeptide: Redox-sensing transcriptional repressor Rex (211 aa).

A DNA-binding region (H-T-H motif) is located at residues 17-56; that stretch reads LYYRFVSSLKSKGIDRVNSKAISDALQIDSATIRRDFSYF. Residue 91–96 coordinates NAD(+); that stretch reads GVGNLG.

Belongs to the transcriptional regulatory Rex family. In terms of assembly, homodimer.

Its subcellular location is the cytoplasm. Its function is as follows. Modulates transcription in response to changes in cellular NADH/NAD(+) redox state. The protein is Redox-sensing transcriptional repressor Rex of Staphylococcus aureus (strain Mu3 / ATCC 700698).